A 450-amino-acid polypeptide reads, in one-letter code: UDP-N-acetylmuramoylalanine--D-glutamate ligase (450 aa).

An ATP-binding site is contributed by G119–T125.

The protein belongs to the MurCDEF family.

It localises to the cytoplasm. It carries out the reaction UDP-N-acetyl-alpha-D-muramoyl-L-alanine + D-glutamate + ATP = UDP-N-acetyl-alpha-D-muramoyl-L-alanyl-D-glutamate + ADP + phosphate + H(+). It functions in the pathway cell wall biogenesis; peptidoglycan biosynthesis. Cell wall formation. Catalyzes the addition of glutamate to the nucleotide precursor UDP-N-acetylmuramoyl-L-alanine (UMA). This chain is UDP-N-acetylmuramoylalanine--D-glutamate ligase, found in Bacillus cereus (strain B4264).